A 541-amino-acid chain; its full sequence is Transcription factor STP2 (541 aa).

Residues V13–N32 are i. Positions D35–D58 are disordered. Positions L73–S105 are II. The segment at Y204–H226 adopts a C2H2-type 1 zinc-finger fold. The C2H2-type 2; atypical zinc finger occupies Y232–H267. The C2H2-type 3; atypical zinc finger occupies G284–C309. Residues S452 to S462 show a composition bias toward low complexity. The interval S452–S497 is disordered. A compositionally biased stretch (polar residues) spans P465–S482.

In terms of assembly, interacts (via Region II) with SSY5; protease component of the SPS-sensor. Post-translationally, activated by the amino acid-induced proteolytic removal of an N-terminal inhibitory domain by serine protease SSY5, an intrinsic component of the SPS-sensor. Processing requires at least 2 components of the SCF(GRR1) ubiquitin ligase complex, namely the F-box protein GRR1 and the E2 enzyme CDC34, but does not depend on the proteasome. Processing is negatively regulated by the protein phosphatase 2A regulatory subunit RTS1.

It is found in the cell membrane. Its subcellular location is the nucleus. Functionally, transcription factor involved in the regulation of gene expression in response to extracellular amino acid levels. Synthesized as latent cytoplasmic precursor, which, upon a signal initiated by the plasma membrane SPS (SSY1-PTR3-SSY5) amino acid sensor system, becomes proteolytically activated and relocates to the nucleus, where it induces the expression of SPS-sensor-regulated genes, including the amino-acid permeases BAP2 and BAP3. Binding to promoters is facilitated by DAL81. Involved in the repression of genes subject to nitrogen catabolite repression and genes involved in stress response. Negatively regulated by inner nuclear membrane proteins ASI1, ASI2 and ASI3, which prevent unprocessed precursor forms that escape cytoplasmic anchoring from inducing SPS-sensor-regulated genes. This chain is Transcription factor STP2 (STP2), found in Saccharomyces cerevisiae (strain ATCC 204508 / S288c) (Baker's yeast).